Reading from the N-terminus, the 486-residue chain is Siroheme synthase (486 aa).

The tract at residues 1-204 (MNYLPIFVDL…HQIEQAEALV (204 aa)) is precorrin-2 dehydrogenase /sirohydrochlorin ferrochelatase. NAD(+) is bound by residues 22-23 (HI) and 43-44 (EK). Serine 128 carries the post-translational modification Phosphoserine. The tract at residues 216–486 (GEVSLVGAGP…NKETHWKQAA (271 aa)) is uroporphyrinogen-III C-methyltransferase. S-adenosyl-L-methionine is bound at residue proline 225. The active-site Proton acceptor is the aspartate 248. The active-site Proton donor is the lysine 270. S-adenosyl-L-methionine-binding positions include 301–303 (GGD), valine 306, 331–332 (TA), methionine 383, and glycine 412.

This sequence in the N-terminal section; belongs to the precorrin-2 dehydrogenase / sirohydrochlorin ferrochelatase family. It in the C-terminal section; belongs to the precorrin methyltransferase family.

The enzyme catalyses uroporphyrinogen III + 2 S-adenosyl-L-methionine = precorrin-2 + 2 S-adenosyl-L-homocysteine + H(+). It catalyses the reaction precorrin-2 + NAD(+) = sirohydrochlorin + NADH + 2 H(+). The catalysed reaction is siroheme + 2 H(+) = sirohydrochlorin + Fe(2+). Its pathway is cofactor biosynthesis; adenosylcobalamin biosynthesis; precorrin-2 from uroporphyrinogen III: step 1/1. It participates in cofactor biosynthesis; adenosylcobalamin biosynthesis; sirohydrochlorin from precorrin-2: step 1/1. It functions in the pathway porphyrin-containing compound metabolism; siroheme biosynthesis; precorrin-2 from uroporphyrinogen III: step 1/1. The protein operates within porphyrin-containing compound metabolism; siroheme biosynthesis; siroheme from sirohydrochlorin: step 1/1. Its pathway is porphyrin-containing compound metabolism; siroheme biosynthesis; sirohydrochlorin from precorrin-2: step 1/1. Functionally, multifunctional enzyme that catalyzes the SAM-dependent methylations of uroporphyrinogen III at position C-2 and C-7 to form precorrin-2 via precorrin-1. Then it catalyzes the NAD-dependent ring dehydrogenation of precorrin-2 to yield sirohydrochlorin. Finally, it catalyzes the ferrochelation of sirohydrochlorin to yield siroheme. The protein is Siroheme synthase of Actinobacillus pleuropneumoniae serotype 3 (strain JL03).